The following is a 650-amino-acid chain: Acetyl-coenzyme A synthetase (650 aa).

CoA is bound by residues 191-194 (RGGR), threonine 311, and asparagine 335. ATP-binding positions include 387 to 389 (GEP), 411 to 416 (DTWWQT), aspartate 500, and arginine 515. Serine 523 is a binding site for CoA. Arginine 526 lines the ATP pocket. Mg(2+) contacts are provided by valine 537, histidine 539, and valine 542. CoA is bound at residue arginine 584. An N6-acetyllysine modification is found at lysine 609.

The protein belongs to the ATP-dependent AMP-binding enzyme family. Mg(2+) is required as a cofactor. Post-translationally, acetylated. Deacetylation by the SIR2-homolog deacetylase activates the enzyme.

The catalysed reaction is acetate + ATP + CoA = acetyl-CoA + AMP + diphosphate. Functionally, catalyzes the conversion of acetate into acetyl-CoA (AcCoA), an essential intermediate at the junction of anabolic and catabolic pathways. AcsA undergoes a two-step reaction. In the first half reaction, AcsA combines acetate with ATP to form acetyl-adenylate (AcAMP) intermediate. In the second half reaction, it can then transfer the acetyl group from AcAMP to the sulfhydryl group of CoA, forming the product AcCoA. The polypeptide is Acetyl-coenzyme A synthetase (Shewanella putrefaciens (strain CN-32 / ATCC BAA-453)).